A 229-amino-acid polypeptide reads, in one-letter code: Ribonuclease T (229 aa).

In terms of domain architecture, Exonuclease spans 23 to 197 (VIIDVETAGF…YDTERTAELF (175 aa)). Mg(2+) is bound by residues D26, E28, H184, and D189. Residue H184 is the Proton donor/acceptor of the active site.

This sequence belongs to the RNase T family. As to quaternary structure, homodimer. It depends on Mg(2+) as a cofactor.

Trims short 3' overhangs of a variety of RNA species, leaving a one or two nucleotide 3' overhang. Responsible for the end-turnover of tRNA: specifically removes the terminal AMP residue from uncharged tRNA (tRNA-C-C-A). Also appears to be involved in tRNA biosynthesis. This is Ribonuclease T from Haemophilus influenzae (strain PittEE).